The sequence spans 265 residues: Mlc titration factor A (265 aa).

Zn(2+) is bound by residues histidine 111, histidine 148, histidine 152, and glutamate 211.

The protein belongs to the MtfA family. In terms of assembly, interacts with Mlc. Zn(2+) serves as cofactor.

It localises to the cytoplasm. Its function is as follows. Involved in the modulation of the activity of the glucose-phosphotransferase system (glucose-PTS). Interacts with the transcriptional repressor Mlc, preventing its interaction with DNA and leading to the modulation of expression of genes regulated by Mlc, including ptsG, which encodes the PTS system glucose-specific EIICB component. Shows zinc-dependent metallopeptidase activity. In Escherichia coli O127:H6 (strain E2348/69 / EPEC), this protein is Mlc titration factor A.